The following is a 54-amino-acid chain: Large ribosomal subunit protein bL33A (54 aa).

This sequence belongs to the bacterial ribosomal protein bL33 family.

This chain is Large ribosomal subunit protein bL33A, found in Myxococcus xanthus (strain DK1622).